Reading from the N-terminus, the 213-residue chain is Pyrrolidone-carboxylate peptidase (213 aa).

Residues glutamate 78, cysteine 141, and histidine 165 contribute to the active site.

It belongs to the peptidase C15 family. Homotetramer.

It localises to the cytoplasm. The catalysed reaction is Release of an N-terminal pyroglutamyl group from a polypeptide, the second amino acid generally not being Pro.. Removes 5-oxoproline from various penultimate amino acid residues except L-proline. The sequence is that of Pyrrolidone-carboxylate peptidase from Clostridium perfringens (strain SM101 / Type A).